Reading from the N-terminus, the 393-residue chain is NAD(P)H-quinone oxidoreductase subunit H, chloroplastic (393 aa).

Belongs to the complex I 49 kDa subunit family. As to quaternary structure, NDH is composed of at least 16 different subunits, 5 of which are encoded in the nucleus.

It is found in the plastid. The protein localises to the chloroplast thylakoid membrane. The catalysed reaction is a plastoquinone + NADH + (n+1) H(+)(in) = a plastoquinol + NAD(+) + n H(+)(out). It catalyses the reaction a plastoquinone + NADPH + (n+1) H(+)(in) = a plastoquinol + NADP(+) + n H(+)(out). In terms of biological role, NDH shuttles electrons from NAD(P)H:plastoquinone, via FMN and iron-sulfur (Fe-S) centers, to quinones in the photosynthetic chain and possibly in a chloroplast respiratory chain. The immediate electron acceptor for the enzyme in this species is believed to be plastoquinone. Couples the redox reaction to proton translocation, and thus conserves the redox energy in a proton gradient. In Nasturtium officinale (Watercress), this protein is NAD(P)H-quinone oxidoreductase subunit H, chloroplastic.